The primary structure comprises 253 residues: uncharacterized protein (253 aa).

Residues Gly-45, 66–67 (DA), 94–95 (AE), and Arg-110 contribute to the S-adenosyl-L-methionine site.

The protein belongs to the methyltransferase superfamily.

This is an uncharacterized protein from Bacillus subtilis (strain 168).